Consider the following 190-residue polypeptide: Putative transcription factor ovo-like protein 3 (190 aa).

2 disordered regions span residues 1–21 and 35–65; these read MPRA…GHLP and SLGG…SAPR. Residues 41–62 are compositionally biased toward polar residues; the sequence is AQQSSSVRDPWTAQPTQGNLTS. 4 C2H2-type zinc fingers span residues 70–92, 98–120, 126–149, and 165–187; these read LGCP…LKCH, HLCR…MRTH, FRCS…AKVH, and HVCE…RALH.

It belongs to the krueppel C2H2-type zinc-finger protein family.

The protein localises to the nucleus. Its function is as follows. May act as a transcription regulator. In Homo sapiens (Human), this protein is Putative transcription factor ovo-like protein 3 (OVOL3).